We begin with the raw amino-acid sequence, 470 residues long: Neuronal acetylcholine receptor subunit beta-4 (470 aa).

A signal peptide spans 1–3 (STA). Topologically, residues 4–216 (ADAEEKLMNH…IIKRKPLFYT (213 aa)) are extracellular. N-linked (GlcNAc...) asparagine glycosylation is found at asparagine 29, asparagine 118, and asparagine 146. Residues cysteine 133 and cysteine 147 are joined by a disulfide bond. The chain crosses the membrane as a helical span at residues 217-237 (INLIIPCVLITSLAILVFYLP). The Cytoplasmic segment spans residues 238–245 (SDCGEKMT). Glutamate 242 serves as a coordination point for Na(+). The helical transmembrane segment at 246–266 (LCISVLLALTVFLLLISKIVP) threads the bilayer. At 267–278 (PTSLDVPLIGKY) the chain is on the extracellular side. Residues 279–299 (LMFTMVLVTFSIVTSVCVLNV) traverse the membrane as a helical segment. The Cytoplasmic portion of the chain corresponds to 300–438 (HHRSPSTHTM…WKYVAMVVDR (139 aa)). The chain crosses the membrane as a helical span at residues 439–459 (LFLWIFVLVCVLGTVGLFLQP). The Extracellular segment spans residues 460–470 (LFQNHIAATNP).

It belongs to the ligand-gated ion channel (TC 1.A.9) family. Acetylcholine receptor (TC 1.A.9.1) subfamily. Beta-4/CHRNB4 sub-subfamily. In terms of assembly, neuronal AChR is composed of two different types of subunits: alpha and beta. CHRNB4/Beta-4 subunit can be combined to CHRNA2/alpha-2, CHRNA3/alpha-3 or CHRNA4/alpha-4, CHRNA5/alpha-5 and CHRNB3/beta-3 to give rise to functional receptors.

The protein localises to the synaptic cell membrane. It localises to the cell membrane. The catalysed reaction is Ca(2+)(in) = Ca(2+)(out). The enzyme catalyses K(+)(in) = K(+)(out). It carries out the reaction Na(+)(in) = Na(+)(out). With respect to regulation, activated by a myriad of ligands such as acetylcholine, cytisine, nicotine, choline and epibatidine. The heteropentamer CHRNA3:CHRNB4 activity is blocked by the alpha-conotoxin ImI and AuIB. Its function is as follows. Component of neuronal acetylcholine receptors (nAChRs) that function as pentameric, ligand-gated cation channels with high calcium permeability among other activities. nAChRs are excitatory neurotrasnmitter receptors formed by a collection of nAChR subunits known to mediate synaptic transmission in the nervous system and the neuromuscular junction. Each nAchR subunit confers differential attributes to channel properties, including activation, deactivation and desensitization kinetics, pH sensitivity, cation permeability, and binding to allosteric modulators. CHRNB4 forms heteropentameric neuronal acetylcholine receptors with CHRNA2, CHRNA3 and CHRNA4, as well as CHRNA5 and CHRNB3 as accesory subunits. CHRNA3:CHRNB4 being predominant in neurons of the autonomic ganglia, it is known as ganglionic nicotinic receptor. CHRNA3:CHRNB4 or CHRNA3:CHRNA5:CHRNB4 play also an important role in the habenulo-interpeduncular tract, modulating the mesolimbic dopamine system and affecting reward circuits and addiction. Hypothalamic CHRNA3:CHRNB4 nAChR activation by nicotine leads to activation of POMC neurons and a decrease in food intake. The sequence is that of Neuronal acetylcholine receptor subunit beta-4 (CHRNB4) from Gallus gallus (Chicken).